A 350-amino-acid chain; its full sequence is Mitogen-activated protein kinase HOG1 (350 aa).

The region spanning 20-299 (YTDLQPVGMG…AAQALAHEYL (280 aa)) is the Protein kinase domain. ATP-binding positions include 26 to 34 (VGMGAFGLV) and K49. D141 functions as the Proton acceptor in the catalytic mechanism. The TXY signature appears at 171 to 173 (TGY).

The protein belongs to the protein kinase superfamily. Ser/Thr protein kinase family. MAP kinase subfamily. HOG1 sub-subfamily. The cofactor is Mg(2+).

It is found in the cytoplasm. The protein localises to the nucleus. It carries out the reaction L-seryl-[protein] + ATP = O-phospho-L-seryl-[protein] + ADP + H(+). The enzyme catalyses L-threonyl-[protein] + ATP = O-phospho-L-threonyl-[protein] + ADP + H(+). In terms of biological role, proline-directed serine/threonine-protein kinase involved in a signal transduction pathway that is activated by changes in the osmolarity of the extracellular environment. Controls osmotic regulation of transcription of target genes. Involved in environmental stress response. Via the downstream MSN2 transcription factor, may play roles in the regulation of growth, conidiation, trap development, fatty acid metabolism and secondary metabolites biosynthesis. In Arthrobotrys oligospora (strain ATCC 24927 / CBS 115.81 / DSM 1491) (Nematode-trapping fungus), this protein is Mitogen-activated protein kinase HOG1.